The chain runs to 836 residues: Probable serine/threonine-protein kinase dyrk1 (836 aa).

Residues 99 to 278 (QQQYQQQHNN…SSNNNNNNKQ (180 aa)) are compositionally biased toward low complexity. Positions 99–286 (QQQYQQQHNN…KQSKYNDGYD (188 aa)) are disordered. The Protein kinase domain maps to 304-624 (FEIISSLGKG…PLEALQHSFF (321 aa)). Residues 310 to 318 (LGKGSFGQV) and K333 each bind ATP. The active-site Proton acceptor is the D432. Disordered stretches follow at residues 627 to 697 (DETS…QQQQ), 718 to 767 (TYSP…INSN), and 785 to 836 (NIYN…NNNI). A compositionally biased stretch (low complexity) spans 630 to 697 (SQPPQQQSQQ…QQLQQQQQQQ (68 aa)). Positions 718–728 (TYSPTTQQSNH) are enriched in polar residues. Residues 729 to 744 (KLVDQMKKASMKDKSP) are compositionally biased toward basic and acidic residues. The segment covering 785–816 (NIYNNNNNNNNNNNNNNNNNNSNNYNNSNELS) has biased composition (low complexity).

It belongs to the protein kinase superfamily. CMGC Ser/Thr protein kinase family. MNB/DYRK subfamily.

It catalyses the reaction L-seryl-[protein] + ATP = O-phospho-L-seryl-[protein] + ADP + H(+). The catalysed reaction is L-threonyl-[protein] + ATP = O-phospho-L-threonyl-[protein] + ADP + H(+). The enzyme catalyses L-tyrosyl-[protein] + ATP = O-phospho-L-tyrosyl-[protein] + ADP + H(+). The chain is Probable serine/threonine-protein kinase dyrk1 (dyrk1) from Dictyostelium discoideum (Social amoeba).